The following is a 75-amino-acid chain: Meucin-49 (75 aa).

The first 22 residues, 1–22 (MNKKILLVIFIVTMLIVDEVNS), serve as a signal peptide directing secretion.

The protein belongs to the non-disulfide-bridged peptide (NDBP) superfamily. Long chain multifunctional peptide (group 2) family. As to expression, expressed by the venom gland.

Its subcellular location is the secreted. Functionally, insecticidal toxin and antimicrobial peptide with potent activity against both Gram-negative and -positive bacteria, as well as against fungi. Acts by disrupting bacterial membrane integrity. Shows broad-spectrum and highly potent bactericidal activities against the Gram-positive bacteria B.cereus, B.megaterium, B.subtilis, M.luteus, S.aureus, S.epidermidis, S.warneri, S.griseus, S.scabiei, S.mutans, S.salivarius, and S.sanguinis. Also exhibits a wide spectrum of activity against the Gram-negative bacteria A.faecalis, E.coli, P.aeruginosa, P.solanacearum, S.enterica, S.marcescens, and S.maltophilia. Also shows antimicrobial activities against the fungal strains Aspergillus flavus, A.fumigatus, A.nidulans, A.niger, Beauveria bassiana, and Saccharomyces cerevisiae. Its antibiotic activity is potentiated by other antibacterial peptides such as MeuNaTxbeta-4. Also induces cytolysis on mice, lizards and birds erythrocytes. This Mesobuthus eupeus (Lesser Asian scorpion) protein is Meucin-49.